A 337-amino-acid chain; its full sequence is Probable dual-specificity RNA methyltransferase RlmN (337 aa).

The active-site Proton acceptor is Glu-88. The Radical SAM core domain maps to 94–324; it reads SEKRLTVCVS…VRYSRGLATD (231 aa). A disulfide bridge links Cys-101 with Cys-327. [4Fe-4S] cluster-binding residues include Cys-108, Cys-112, and Cys-115. S-adenosyl-L-methionine-binding positions include 155–156, Ser-185, 208–210, and Asn-284; these read GE and SLH. The S-methylcysteine intermediate role is filled by Cys-327.

This sequence belongs to the radical SAM superfamily. RlmN family. It depends on [4Fe-4S] cluster as a cofactor.

It localises to the cytoplasm. The catalysed reaction is adenosine(2503) in 23S rRNA + 2 reduced [2Fe-2S]-[ferredoxin] + 2 S-adenosyl-L-methionine = 2-methyladenosine(2503) in 23S rRNA + 5'-deoxyadenosine + L-methionine + 2 oxidized [2Fe-2S]-[ferredoxin] + S-adenosyl-L-homocysteine. It catalyses the reaction adenosine(37) in tRNA + 2 reduced [2Fe-2S]-[ferredoxin] + 2 S-adenosyl-L-methionine = 2-methyladenosine(37) in tRNA + 5'-deoxyadenosine + L-methionine + 2 oxidized [2Fe-2S]-[ferredoxin] + S-adenosyl-L-homocysteine. Its function is as follows. Specifically methylates position 2 of adenine 2503 in 23S rRNA and position 2 of adenine 37 in tRNAs. This Microcystis aeruginosa (strain NIES-843 / IAM M-2473) protein is Probable dual-specificity RNA methyltransferase RlmN.